A 193-amino-acid polypeptide reads, in one-letter code: Putative protein-glutamate methylesterase/protein-glutamine glutaminase (193 aa).

One can recognise a CheB-type methylesterase domain in the interval 1–179 (MNYEAIVIGV…DYVLSLEKIA (179 aa)). Catalysis depends on residues S11, H38, and D131.

It belongs to the CheB family.

It localises to the cytoplasm. It catalyses the reaction [protein]-L-glutamate 5-O-methyl ester + H2O = L-glutamyl-[protein] + methanol + H(+). It carries out the reaction L-glutaminyl-[protein] + H2O = L-glutamyl-[protein] + NH4(+). Functionally, may be involved in chemotaxis. The polypeptide is Putative protein-glutamate methylesterase/protein-glutamine glutaminase (cheB2) (Leptospira interrogans serogroup Icterohaemorrhagiae serovar copenhageni (strain Fiocruz L1-130)).